The primary structure comprises 367 residues: Leucine-rich repeat-containing protein 28 (367 aa).

LRR repeat units follow at residues 16–36 (KHKN…ELLK), 42–63 (HLER…LAQK), 66–87 (NLVE…IGSL), 89–111 (KLQC…GGLR), 112–133 (ALRH…VGDL), 135–156 (ELQT…LHLC), 158–180 (SLQY…CQLP), 181–202 (SLNE…LGRS), and 204–226 (ELQY…LYNK).

This chain is Leucine-rich repeat-containing protein 28 (Lrrc28), found in Mus musculus (Mouse).